Here is a 739-residue protein sequence, read N- to C-terminus: DEAD-box ATP-dependent RNA helicase 32 (739 aa).

The Q motif motif lies at 71-99 (RKFAQLPISDKTKRGLKDAKYVDMTDVQS). Residues 102–277 (IPHALCGRDI…RLSLRDPEYI (176 aa)) form the Helicase ATP-binding domain. ATP is bound at residue 115 to 122 (ARTGSGKT). The short motif at 225–228 (DEAD) is the DEAD box element. Residues 303 to 461 (KLDMLWSFIK…EVSRLLAALL (159 aa)) form the Helicase C-terminal domain. Residues 643-689 (GAEMRKADIEDKKVDKERRREKRMKQKIKRKRGAMEDEEEEEEEDHD) adopt a coiled-coil conformation. A disordered region spans residues 656–725 (VDKERRREKR…GGKINTDSLS (70 aa)). Positions 661 to 674 (RREKRMKQKIKRKR) are enriched in basic residues. Residues 678-688 (EDEEEEEEEDH) show a composition bias toward acidic residues.

It belongs to the DEAD box helicase family. DDX10/DBP4 subfamily.

It carries out the reaction ATP + H2O = ADP + phosphate + H(+). This Arabidopsis thaliana (Mouse-ear cress) protein is DEAD-box ATP-dependent RNA helicase 32 (RH32).